The chain runs to 116 residues: uncharacterized protein (116 aa).

The CHY-type zinc finger occupies 1–72 (MCKHVLNAQV…SDEYCPNCDN (72 aa)). Zn(2+)-binding residues include Cys2, His4, Cys16, Cys17, Cys23, Cys26, His27, His33, Cys45, Cys48, Cys67, and Cys70.

The protein resides in the cytoplasm. This is an uncharacterized protein from Schizosaccharomyces pombe (strain 972 / ATCC 24843) (Fission yeast).